The sequence spans 92 residues: Acylphosphatase (92 aa).

The 88-residue stretch at 5–92 (GVTIYVYGRV…EDIADFIVRH (88 aa)) folds into the Acylphosphatase-like domain. Catalysis depends on residues Arg20 and Asn38.

It belongs to the acylphosphatase family.

The catalysed reaction is an acyl phosphate + H2O = a carboxylate + phosphate + H(+). This Photorhabdus laumondii subsp. laumondii (strain DSM 15139 / CIP 105565 / TT01) (Photorhabdus luminescens subsp. laumondii) protein is Acylphosphatase (acyP).